Reading from the N-terminus, the 426-residue chain is Enolase (426 aa).

Residues 32–53 are disordered; that stretch reads TGRAAVPSGASTGAYEAHEQRD. Residue Gln-163 coordinates (2R)-2-phosphoglycerate. The Proton donor role is filled by Glu-205. Mg(2+) contacts are provided by Asp-242, Glu-285, and Asp-312. Positions 337, 366, 367, and 388 each coordinate (2R)-2-phosphoglycerate. Lys-337 (proton acceptor) is an active-site residue.

This sequence belongs to the enolase family. Mg(2+) is required as a cofactor.

The protein resides in the cytoplasm. It is found in the secreted. The protein localises to the cell surface. The catalysed reaction is (2R)-2-phosphoglycerate = phosphoenolpyruvate + H2O. The protein operates within carbohydrate degradation; glycolysis; pyruvate from D-glyceraldehyde 3-phosphate: step 4/5. Functionally, catalyzes the reversible conversion of 2-phosphoglycerate (2-PG) into phosphoenolpyruvate (PEP). It is essential for the degradation of carbohydrates via glycolysis. The polypeptide is Enolase (Hyphomonas neptunium (strain ATCC 15444)).